The chain runs to 366 residues: Dihydroflavonol 4-reductase (366 aa).

Positions 45 and 164 each coordinate NADP(+).

The protein belongs to the NAD(P)-dependent epimerase/dehydratase family. Dihydroflavonol-4-reductase subfamily.

It carries out the reaction a (2R,3S,4S)-leucoanthocyanidin + NADP(+) = a (2R,3R)-dihydroflavonol + NADPH + H(+). The catalysed reaction is (2S)-flavan-4-ol + NADP(+) = (2S)-flavanone + NADPH + H(+). Its pathway is pigment biosynthesis; anthocyanin biosynthesis. Functionally, bifunctional enzyme involved in flavonoid metabolism. The protein is Dihydroflavonol 4-reductase (DFR) of Gerbera hybrida (Daisy).